We begin with the raw amino-acid sequence, 154 residues long: Large ribosomal subunit protein uL13 (154 aa).

This sequence belongs to the universal ribosomal protein uL13 family. Part of the 50S ribosomal subunit.

Its function is as follows. This protein is one of the early assembly proteins of the 50S ribosomal subunit, although it is not seen to bind rRNA by itself. It is important during the early stages of 50S assembly. The sequence is that of Large ribosomal subunit protein uL13 from Bartonella quintana (strain Toulouse) (Rochalimaea quintana).